A 323-amino-acid chain; its full sequence is tRNA U34 carboxymethyltransferase (323 aa).

Residues K91, W105, K110, G130, 152–154 (DPT), 181–182 (IE), M196, Y200, and R315 each bind carboxy-S-adenosyl-L-methionine.

Belongs to the class I-like SAM-binding methyltransferase superfamily. CmoB family. In terms of assembly, homotetramer.

The catalysed reaction is carboxy-S-adenosyl-L-methionine + 5-hydroxyuridine(34) in tRNA = 5-carboxymethoxyuridine(34) in tRNA + S-adenosyl-L-homocysteine + H(+). In terms of biological role, catalyzes carboxymethyl transfer from carboxy-S-adenosyl-L-methionine (Cx-SAM) to 5-hydroxyuridine (ho5U) to form 5-carboxymethoxyuridine (cmo5U) at position 34 in tRNAs. In Escherichia coli O6:H1 (strain CFT073 / ATCC 700928 / UPEC), this protein is tRNA U34 carboxymethyltransferase.